We begin with the raw amino-acid sequence, 367 residues long: UDP-galactopyranose mutase (367 aa).

FAD-binding positions include Phe12, 31-32, Asn39, and 56-57; these read EK and HI. Phe12 provides a ligand contact to UDP-alpha-D-galactose. The UDP-alpha-D-galactose site is built by Asn80, Thr152, Trp156, and Tyr181. FAD is bound at residue 212-213; it reads DF. 3 residues coordinate UDP-alpha-D-galactose: Asn268, Arg278, and Tyr311. Residue Arg340 participates in FAD binding. UDP-alpha-D-galactose is bound at residue Tyr346. 347-352 is a binding site for FAD; it reads YDMHQV.

As to quaternary structure, homodimer. FAD is required as a cofactor.

It catalyses the reaction UDP-alpha-D-galactose = UDP-alpha-D-galactofuranose. The protein operates within bacterial outer membrane biogenesis; lipopolysaccharide biosynthesis. In terms of biological role, catalyzes the interconversion through a 2-keto intermediate of uridine diphosphogalactopyranose (UDP-GalP) into uridine diphosphogalactofuranose (UDP-GalF). This Escherichia coli (strain K12) protein is UDP-galactopyranose mutase (glf).